The sequence spans 157 residues: Protein BeeE (157 aa).

The protein belongs to the phage portal family.

This is Protein BeeE (beeE) from Escherichia coli (strain K12).